A 293-amino-acid chain; its full sequence is Ethanolamine ammonia-lyase small subunit (293 aa).

Residues Val-207 and Glu-228 each contribute to the adenosylcob(III)alamin site.

This sequence belongs to the EutC family. In terms of assembly, the basic unit is a heterodimer which dimerizes to form tetramers. The heterotetramers trimerize; 6 large subunits form a core ring with 6 small subunits projecting outwards. Adenosylcob(III)alamin serves as cofactor.

The protein localises to the bacterial microcompartment. It carries out the reaction ethanolamine = acetaldehyde + NH4(+). It functions in the pathway amine and polyamine degradation; ethanolamine degradation. Catalyzes the deamination of various vicinal amino-alcohols to oxo compounds. Allows this organism to utilize ethanolamine as the sole source of nitrogen and carbon in the presence of external vitamin B12. The protein is Ethanolamine ammonia-lyase small subunit of Listeria monocytogenes serovar 1/2a (strain ATCC BAA-679 / EGD-e).